The primary structure comprises 281 residues: Ribosomal RNA small subunit methyltransferase A (281 aa).

Residues N18, L20, G45, E66, D91, and N118 each contribute to the S-adenosyl-L-methionine site.

This sequence belongs to the class I-like SAM-binding methyltransferase superfamily. rRNA adenine N(6)-methyltransferase family. RsmA subfamily.

The protein localises to the cytoplasm. It catalyses the reaction adenosine(1518)/adenosine(1519) in 16S rRNA + 4 S-adenosyl-L-methionine = N(6)-dimethyladenosine(1518)/N(6)-dimethyladenosine(1519) in 16S rRNA + 4 S-adenosyl-L-homocysteine + 4 H(+). Functionally, specifically dimethylates two adjacent adenosines (A1518 and A1519) in the loop of a conserved hairpin near the 3'-end of 16S rRNA in the 30S particle. May play a critical role in biogenesis of 30S subunits. The polypeptide is Ribosomal RNA small subunit methyltransferase A (Histophilus somni (strain 129Pt) (Haemophilus somnus)).